Here is a 38-residue protein sequence, read N- to C-terminus: Large ribosomal subunit protein bL36A (38 aa).

It belongs to the bacterial ribosomal protein bL36 family.

This Pectobacterium atrosepticum (strain SCRI 1043 / ATCC BAA-672) (Erwinia carotovora subsp. atroseptica) protein is Large ribosomal subunit protein bL36A.